Here is a 438-residue protein sequence, read N- to C-terminus: L-cysteine:1D-myo-inositol 2-amino-2-deoxy-alpha-D-glucopyranoside ligase (438 aa).

The disordered stretch occupies residues 1–27 (MDSWTSPDVPALPFTAEGPRVHDTARG). C45 is a binding site for Zn(2+). Residues 45–48 (CGIT), T60, and 83–85 (NVT) contribute to the L-cysteinyl-5'-AMP site. The short motif at 47 to 57 (ITPYDATHLGH) is the 'HIGH' region element. The short motif at 197-202 (DRGGDP) is the 'ERGGDP' region element. W238 contributes to the L-cysteinyl-5'-AMP binding site. C242 lines the Zn(2+) pocket. 260 to 262 (GDD) is an L-cysteinyl-5'-AMP binding site. H267 contributes to the Zn(2+) binding site. V293 contributes to the L-cysteinyl-5'-AMP binding site. Positions 299–303 (KMSKS) match the 'KMSKS' region motif.

The protein belongs to the class-I aminoacyl-tRNA synthetase family. MshC subfamily. Monomer. The cofactor is Zn(2+).

It carries out the reaction 1D-myo-inositol 2-amino-2-deoxy-alpha-D-glucopyranoside + L-cysteine + ATP = 1D-myo-inositol 2-(L-cysteinylamino)-2-deoxy-alpha-D-glucopyranoside + AMP + diphosphate + H(+). Its function is as follows. Catalyzes the ATP-dependent condensation of GlcN-Ins and L-cysteine to form L-Cys-GlcN-Ins. This Kytococcus sedentarius (strain ATCC 14392 / DSM 20547 / JCM 11482 / CCUG 33030 / NBRC 15357 / NCTC 11040 / CCM 314 / 541) (Micrococcus sedentarius) protein is L-cysteine:1D-myo-inositol 2-amino-2-deoxy-alpha-D-glucopyranoside ligase.